Here is a 344-residue protein sequence, read N- to C-terminus: MAENKQVDTEINGEDFTKDVTADGPGSENGDAGAAGSTNGSSDNQSAASGQRDDDRKLFVGGLSWETTEKELRDHFGKYGEIESINVKTDPQTGRSRGFAFIVFTNTEAIDKVSAADEHIINSKKVDPKKAKARHGKIFVGGLTTEISDEEIKTYFGQFGNIVEVEMPFDKQKSQRKGFCFITFDSEQVVTDLLKTPKQKIAGKEVDVKRATPKPENQMMGGMRGGPRGGMRGGRGGYGGRGGYNNQWDGQGSYGGYGGGYGGYGAGGYGDYYAGGYYNGYDYGYDGYGYGGGFEGNGYGGGGGGNMGGGRGGPRGGGGPKGGGGFNGGKQRGGGGRQQRHQPY.

Positions 1 to 55 (MAENKQVDTEINGEDFTKDVTADGPGSENGDAGAAGSTNGSSDNQSAASGQRDDD) are disordered. Residues 36–49 (GSTNGSSDNQSAAS) show a composition bias toward polar residues. 2 RRM domains span residues 56 to 138 (RKLF…HGKI) and 136 to 213 (GKIF…RATP). S148 is subject to Phosphoserine. Disordered stretches follow at residues 214-238 (KPEN…RGGY) and 301-344 (GGGG…HQPY). Residues 215–254 (PENQMMGGMRGGPRGGMRGGRGGYGGRGGYNNQWDGQGSY) are M9-like motif. Composition is skewed to gly residues over residues 222 to 238 (GMRG…RGGY) and 301 to 337 (GGGG…GGGR). The interval 300 to 338 (GGGGGGNMGGGRGGPRGGGGPKGGGGFNGGKQRGGGGRQ) is M9 motif.

Interacts with bru1/Bruno; the interaction is direct but weak, and may play a role in regulation of grk mRNA localization and translation. In terms of assembly, interacts (probably via M9 and M9-like motifs) with Tnpo/Transportin; the interaction is direct and is involved in nuclear localization. Interacts with fs(1)K10 (via N-terminus); may be involved in localization of sqd in the oocyte during oogenesis. As to quaternary structure, interacts (via C-terminus) with Hrb27C; the interaction is RNA dependent. Does not interact with Tnpo/Transportin. Interacts with fs(1)K10 (via N-terminus); may be involved in localization of sqd in the oocyte during oogenesis. Interacts (probably via M9-like motif) with Tnpo/Transportin; the interaction is direct and is involved in nuclear localization. Interacts with fs(1)K10 (via N-terminus); may be involved in localization of sqd in the oocyte during oogenesis.

It is found in the nucleus. Its subcellular location is the cytoplasm. Its function is as follows. Component of ribonucleosomes. Could be needed to organize a concentration gradient of a dorsalizing morphogen (Dm) originating in the germinal vesicle. At least one of the isoforms is essential in somatic tissues. Interacts with grk mRNA (via 3' UTR) and involved in its localization to the dorsal anterior region of the oocyte during dorsal-ventral axis determination; may function as a ribonuclear protein complex together with otu and Hrb27C. Required for polytene chromosome dispersal in nurse cells during oogenesis; nuclear isoforms play a greater role in this than cytoplasmic isoforms. Functionally, required nonredundantly with isoform A/sqdA for dorsoventral pattern determination during oogenesis. May be important in somatic tissues. Required nonredundantly with isoform B/SqdS for dorsoventral pattern determination during oogenesis. In terms of biological role, may lack a role in dorsoventral pattern determination during oogenesis. May be important in somatic tissues. This Drosophila melanogaster (Fruit fly) protein is RNA-binding protein squid.